A 223-amino-acid chain; its full sequence is UPF0441 protein YgiB (223 aa).

Residues 178-195 show a composition bias toward low complexity; sequence TVPKTAMAPKPATTTTVT. The disordered stretch occupies residues 178–223; sequence TVPKTAMAPKPATTTTVTRGGFGESVAKQSTMQRSAAGTSTRSMGG. Residues 204 to 223 are compositionally biased toward polar residues; that stretch reads AKQSTMQRSAAGTSTRSMGG.

The protein belongs to the UPF0441 family.

This Salmonella enteritidis PT4 (strain P125109) protein is UPF0441 protein YgiB.